The following is a 740-amino-acid chain: Eukaryotic translation initiation factor 3 subunit B (740 aa).

Residues 1–10 show a composition bias toward polar residues; that stretch reads MAPSFDTLSE. The disordered stretch occupies residues 1–20; it reads MAPSFDTLSEQDLHEEEEEE. The region spanning 40–126 is the RRM domain; the sequence is TFVVIDGLPV…HTLLVNKLMD (87 aa). WD repeat units lie at residues 193 to 230, 232 to 289, 302 to 343, 455 to 496, 513 to 556, and 571 to 609; these read AHWT…KQKQ, PHPF…RSFV, EPKK…LLGK, SLKD…SFFA, IEKK…EKPE, and IEHY…HTFA. A disordered region spans residues 695–721; sequence DAYGLPEEADDPKLAKDAAATTQEQGE.

This sequence belongs to the eIF-3 subunit B family. Component of the eukaryotic translation initiation factor 3 (eIF-3) complex.

The protein resides in the cytoplasm. Its function is as follows. RNA-binding component of the eukaryotic translation initiation factor 3 (eIF-3) complex, which is involved in protein synthesis of a specialized repertoire of mRNAs and, together with other initiation factors, stimulates binding of mRNA and methionyl-tRNAi to the 40S ribosome. The eIF-3 complex specifically targets and initiates translation of a subset of mRNAs involved in cell proliferation. This is Eukaryotic translation initiation factor 3 subunit B (prt1) from Neosartorya fischeri (strain ATCC 1020 / DSM 3700 / CBS 544.65 / FGSC A1164 / JCM 1740 / NRRL 181 / WB 181) (Aspergillus fischerianus).